The chain runs to 265 residues: Phosphonates import ATP-binding protein PhnC 1 (265 aa).

Residues 3-247 form the ABC transporter domain; sequence LRLSAIDLRH…HLDTLYANEQ (245 aa). 36–43 contacts ATP; it reads GPSGAGKT.

It belongs to the ABC transporter superfamily. Phosphonates importer (TC 3.A.1.9.1) family. In terms of assembly, the complex is composed of two ATP-binding proteins (PhnC), two transmembrane proteins (PhnE) and a solute-binding protein (PhnD).

It localises to the cell inner membrane. The enzyme catalyses phosphonate(out) + ATP + H2O = phosphonate(in) + ADP + phosphate + H(+). Part of the ABC transporter complex PhnCDE involved in phosphonates import. Responsible for energy coupling to the transport system. This is Phosphonates import ATP-binding protein PhnC 1 from Pseudomonas syringae pv. tomato (strain ATCC BAA-871 / DC3000).